The following is a 209-amino-acid chain: Probable transcriptional regulator ycf29 (209 aa).

Residues 4-120 (NLMLVENDTV…ELVSLIKNLI (117 aa)) form the Response regulatory domain. A 4-aspartylphosphate modification is found at Asp-53. In terms of domain architecture, HTH luxR-type spans 139–204 (PLFQLLYLTP…LLVKYSIKNN (66 aa)).

The protein localises to the plastid. It localises to the chloroplast. The polypeptide is Probable transcriptional regulator ycf29 (ycf29) (Porphyra purpurea (Red seaweed)).